Reading from the N-terminus, the 267-residue chain is MTYFEAFFLALLQGFTEFLPISSSAHLILPSAILGWSDQGLAFDVAVHVGTLAAVVIYFRKEVVTLLTAWVGSIVKKEHNKESNLAWLIVLATIPAALFGLLFKDFIEIYLRSAWVIAATTIVFGLLLWWVDKNATLAKDEYQMTWKKALFLGIAQAMAMIPGTSRSGITITAALYLGFTREAAARFSFLMSIPIITLAGSYLGLKLAMSDISIHLGLLSTGVIVSFISAYICIHFFLKLISSMGMMPFVIYRILLGSSLLVWLALH.

The next 8 membrane-spanning stretches (helical) occupy residues 1-21 (MTYFEAFFLALLQGFTEFLPI), 39-59 (QGLAFDVAVHVGTLAAVVIYF), 83-103 (SNLAWLIVLATIPAALFGLLF), 111-131 (LRSAWVIAATTIVFGLLLWWV), 149-169 (ALFLGIAQAMAMIPGTSRSGI), 189-209 (FLMSIPIITLAGSYLGLKLAM), 218-238 (LLSTGVIVSFISAYICIHFFL), and 246-266 (MMPFVIYRILLGSSLLVWLAL).

Belongs to the UppP family.

The protein localises to the cell inner membrane. It carries out the reaction di-trans,octa-cis-undecaprenyl diphosphate + H2O = di-trans,octa-cis-undecaprenyl phosphate + phosphate + H(+). Functionally, catalyzes the dephosphorylation of undecaprenyl diphosphate (UPP). Confers resistance to bacitracin. This Aliivibrio fischeri (strain ATCC 700601 / ES114) (Vibrio fischeri) protein is Undecaprenyl-diphosphatase.